A 417-amino-acid polypeptide reads, in one-letter code: RH-like protein IIF (417 aa).

11 consecutive transmembrane segments (helical) span residues 12-32 (CLPL…YFFT), 44-64 (LVAS…GFGF), 77-97 (VAFN…LDGF), 125-145 (ISAG…MVLV), 172-192 (FYLF…KPLP), 203-223 (TIPS…WPSF), 238-258 (VFNT…GSSL), 265-285 (ISMT…GTSC), 287-307 (LIPS…ISIG), 331-351 (NFSL…VRHT), and 358-378 (MIGF…AIAL).

The protein belongs to the ammonium transporter (TC 2.A.49) family. Rh subfamily.

The protein resides in the membrane. Functionally, may be part of an oligomeric complex which is likely to have a transport or channel function in the erythrocyte membrane. This Pan troglodytes (Chimpanzee) protein is RH-like protein IIF.